A 598-amino-acid polypeptide reads, in one-letter code: NADPH-dependent diflavin oxidoreductase 1 (598 aa).

A Flavodoxin-like domain is found at 6–150 (LLVLFGSQTG…AIDPWVGDLW (145 aa)). FMN contacts are provided by residues 12–17 (SQTGTA), 59–62 (ATTG), 97–106 (LGDSSYAKFN), and Asp132. The region spanning 206–448 (LQPFLAPVIT…VRPGSLVFPK (243 aa)) is the FAD-binding FR-type domain. Residues Arg350, 382–385 (RAFS), and 416–419 (GLCS) each bind FAD. Residues Thr461, 516–517 (SR), 522–526 (KVYVQ), and Asp559 contribute to the NADP(+) site. Trp597 lines the FAD pocket.

The protein belongs to the NADPH-dependent diflavin oxidoreductase NDOR1 family. In the N-terminal section; belongs to the flavodoxin family. This sequence in the C-terminal section; belongs to the flavoprotein pyridine nucleotide cytochrome reductase family. In terms of assembly, interacts with CIAPIN1; as part of the cytosolic iron-sulfur (Fe-S) protein assembly (CIA) machinery. Interacts with DCPS. Requires FAD as cofactor. It depends on FMN as a cofactor.

It localises to the cytoplasm. It is found in the perinuclear region. It carries out the reaction 2 oxidized [2Fe-2S]-[protein] + NADPH = 2 reduced [2Fe-2S]-[protein] + NADP(+) + H(+). NADPH-dependent reductase which is a central component of the cytosolic iron-sulfur (Fe-S) protein assembly (CIA) machinery. Transfers electrons from NADPH via its FAD and FMN prosthetic groups to the [2Fe-2S] cluster of CIAPIN1, another key component of the CIA machinery. In turn, this reduced cluster provides electrons for assembly of cytosolic iron-sulfur cluster proteins. It can also reduce the [2Fe-2S] cluster of CISD1 and activate this protein implicated in Fe/S cluster repair. In vitro can fully activate methionine synthase/MTR in the presence of soluble cytochrome b5/CYB5A. This Mus musculus (Mouse) protein is NADPH-dependent diflavin oxidoreductase 1.